Reading from the N-terminus, the 342-residue chain is MNTNDFDFELPEELIAQTPLEKRDSSKLLIIDHRQKTMVDSHFDHIIDQLNPGDALVMNNTRVLPARLYGEKTDTHGHVELLLLKNTQGDQWEVLAKPAKRLKVGSQVNFGDGHLKATIIDELEHGGRIVEFSYDGIFLEVLESLGEMPLPPYIHEKLEDAERYQTVYAKENGSAAAPTAGLHFTTDLLKKIEAKGVHLVYLTLHVGLGTFRPVSVDNLDEHDMHSEFYSLSEEAAQTLRDVKQAGGRVVAVGTTSIRTLETIGSKFQGDIQADSGWTNIFIKPGYQFKVVDAFSTNFHLPKSTLVMLVSAFAGRDFVLEAYRHAVDEKYRFFSFGDAMFVN.

Belongs to the QueA family. In terms of assembly, monomer.

Its subcellular location is the cytoplasm. It catalyses the reaction 7-aminomethyl-7-carbaguanosine(34) in tRNA + S-adenosyl-L-methionine = epoxyqueuosine(34) in tRNA + adenine + L-methionine + 2 H(+). The protein operates within tRNA modification; tRNA-queuosine biosynthesis. Functionally, transfers and isomerizes the ribose moiety from AdoMet to the 7-aminomethyl group of 7-deazaguanine (preQ1-tRNA) to give epoxyqueuosine (oQ-tRNA). The chain is S-adenosylmethionine:tRNA ribosyltransferase-isomerase from Streptococcus pyogenes serotype M49 (strain NZ131).